A 338-amino-acid chain; its full sequence is Fructose-1,6-bisphosphatase class 1 1 (338 aa).

Mg(2+) is bound by residues Glu91, Asp113, Leu115, and Asp116. Substrate contacts are provided by residues 116–119, Asn208, and Lys274; that span reads DGSS. Position 280 (Glu280) interacts with Mg(2+).

This sequence belongs to the FBPase class 1 family. In terms of assembly, homotetramer. The cofactor is Mg(2+).

It localises to the cytoplasm. The catalysed reaction is beta-D-fructose 1,6-bisphosphate + H2O = beta-D-fructose 6-phosphate + phosphate. The protein operates within carbohydrate biosynthesis; gluconeogenesis. This is Fructose-1,6-bisphosphatase class 1 1 from Cupriavidus taiwanensis (strain DSM 17343 / BCRC 17206 / CCUG 44338 / CIP 107171 / LMG 19424 / R1) (Ralstonia taiwanensis (strain LMG 19424)).